A 434-amino-acid polypeptide reads, in one-letter code: Monodehydroascorbate reductase, seedling isozyme (434 aa).

FAD-binding positions include 13 to 16 (GGVA), glutamate 40, arginine 47, lysine 52, isoleucine 95, and 146 to 147 (RE). Residues 171-177 (GGYIGLE), glutamate 195, arginine 201, and glycine 260 each bind NAD(+). Position 173-177 (173-177 (YIGLE)) interacts with NADP(+). Arginine 201 and glycine 260 together coordinate NADP(+). FAD is bound at residue aspartate 297. An NAD(+)-binding site is contributed by 313 to 314 (EH). 313-314 (EH) contributes to the NADP(+) binding site. Valine 315 is a binding site for FAD. Arginine 319 provides a ligand contact to L-ascorbate. Tyrosine 348 lines the FAD pocket. Tyrosine 348 is an NAD(+) binding site. An NADP(+)-binding site is contributed by tyrosine 348. Position 350 (arginine 350) interacts with L-ascorbate.

This sequence belongs to the FAD-dependent oxidoreductase family. FAD is required as a cofactor.

It is found in the cytoplasm. It catalyses the reaction 2 monodehydro-L-ascorbate radical + NADH + H(+) = 2 L-ascorbate + NAD(+). Functionally, catalyzes the conversion of monodehydroascorbate to ascorbate, oxidizing NADH in the process. The sequence is that of Monodehydroascorbate reductase, seedling isozyme from Cucumis sativus (Cucumber).